Here is a 242-residue protein sequence, read N- to C-terminus: Succinyl-CoA:3-ketoacid coenzyme A transferase subunit A (242 aa).

Residue 33–39 (GGFGLCG) coordinates CoA.

The protein belongs to the 3-oxoacid CoA-transferase subunit A family. As to quaternary structure, heterodimer of a subunit A and a subunit B.

It carries out the reaction a 3-oxo acid + succinyl-CoA = a 3-oxoacyl-CoA + succinate. Its pathway is bacterial outer membrane biogenesis; lipopolysaccharide biosynthesis. This is Succinyl-CoA:3-ketoacid coenzyme A transferase subunit A (lpsI) from Xanthomonas campestris pv. campestris (strain B100).